The primary structure comprises 369 residues: Biglycan (369 aa).

The N-terminal stretch at 1-16 (MWPLWPLAALLALSQA) is a signal peptide. The propeptide occupies 17-37 (LPFEQKAFWDFTLDDGLPMLN). O-linked (Xyl...) (glycosaminoglycan) serine glycosylation is found at serine 42 and serine 48. Cystine bridges form between cysteine 64/cysteine 70 and cysteine 68/cysteine 77. LRR repeat units follow at residues 83 to 103 (KAVP…NNDI), 104 to 127 (SELR…NNKI), 128 to 151 (SKIH…KNHL), 152 to 172 (VEIP…DNRI), 173 to 196 (RKVP…GNPL), 197 to 221 (ENSG…EAKL), 222 to 242 (TGIP…HNKI), 243 to 266 (QAIE…HNQI), 267 to 290 (RMIE…NNKL), 291 to 313 (SRVP…TNNI), 314 to 343 (TKVG…NNPV), and 344 to 369 (PYWE…NYKK). Residues serine 181 and serine 199 are each glycosylated (O-linked (Xyl...) (glycosaminoglycan) serine). N-linked (GlcNAc...) asparagine glycosylation is found at asparagine 271 and asparagine 312. A disulfide bridge connects residues cysteine 322 and cysteine 355.

This sequence belongs to the small leucine-rich proteoglycan (SLRP) family. SLRP class I subfamily. Homodimer. Forms a ternary complex with MFAP2 and ELN. The two attached glycosaminoglycan chains can be either chondroitin sulfate or dermatan sulfate. As to expression, found in several connective tissues, especially in articular cartilages.

It localises to the secreted. Its subcellular location is the extracellular space. It is found in the extracellular matrix. Functionally, may be involved in collagen fiber assembly. This chain is Biglycan (BGN), found in Bos taurus (Bovine).